Here is a 497-residue protein sequence, read N- to C-terminus: Delayed-rectifier potassium channel regulatory subunit KCNS1 (497 aa).

At methionine 1–leucine 186 the chain is on the cytoplasmic side. The helical transmembrane segment at proline 187–isoleucine 208 threads the bilayer. The Extracellular portion of the chain corresponds to histidine 209–proline 239. A helical transmembrane segment spans residues valine 240–leucine 262. The Cytoplasmic segment spans residues alanine 263–proline 273. A helical membrane pass occupies residues leucine 274 to alanine 291. Topologically, residues glycine 292–leucine 309 are extracellular. Residues glycine 310–histidine 330 traverse the membrane as a helical; Voltage-sensor segment. Residues serine 331–tyrosine 345 are Cytoplasmic-facing. A helical membrane pass occupies residues arginine 346–tyrosine 367. Over threonine 368–isoleucine 379 the chain is Extracellular. Residues proline 380 to threonine 391 constitute an intramembrane region (helical). Residues threonine 392–aspartate 397 carry the Selectivity filter motif. Residues threonine 392–valine 399 lie within the membrane without spanning it. The Extracellular portion of the chain corresponds to proline 400 to lysine 406. A helical membrane pass occupies residues leucine 407–tyrosine 435. Topologically, residues arginine 436–tyrosine 497 are cytoplasmic. Residues serine 464–tyrosine 497 are disordered. A compositionally biased stretch (basic and acidic residues) spans threonine 470–aspartate 482.

It belongs to the potassium channel family. S (TC 1.A.1.2) subfamily. Kv9.1/KCNS1 sub-subfamily. In terms of assembly, heterotetramer with KCNB1. Heterotetramer with KCNB2. Does not form homomultimers. Highly expressed in brain, but not in the other tissues tested.

The protein localises to the cell membrane. Functionally, potassium channel regulatory subunit that modulate the delayed rectifier voltage-gated potassium channel activity of KCNB1 and KCNB2 by altering their kinetics, expression levels, and shifting the half-inactivation potential to more polarized values. While it does not form functional channels on its own, it can form functional heterotetrameric channels with KCNB1 and KCNB2. Each regulatory subunit has unique regulatory properties that can lead to extensive inhibition, significant changes in kinetics, and/or substantial shifts in the voltage dependencies of the inactivation process. This chain is Delayed-rectifier potassium channel regulatory subunit KCNS1, found in Rattus norvegicus (Rat).